A 276-amino-acid chain; its full sequence is Large ribosomal subunit protein uL2 (276 aa).

Basic and acidic residues predominate over residues 28 to 38 (RPEKSLTEKLS). Disordered stretches follow at residues 28-57 (RPEK…QGGG) and 219-276 (TVRG…RRKK).

The protein belongs to the universal ribosomal protein uL2 family. In terms of assembly, part of the 50S ribosomal subunit. Forms a bridge to the 30S subunit in the 70S ribosome.

In terms of biological role, one of the primary rRNA binding proteins. Required for association of the 30S and 50S subunits to form the 70S ribosome, for tRNA binding and peptide bond formation. It has been suggested to have peptidyltransferase activity; this is somewhat controversial. Makes several contacts with the 16S rRNA in the 70S ribosome. In Exiguobacterium sp. (strain ATCC BAA-1283 / AT1b), this protein is Large ribosomal subunit protein uL2.